A 294-amino-acid chain; its full sequence is Phosphate import ATP-binding protein PstB (294 aa).

The segment covering 1–18 (MSETMTNQNVVNEEQPFN) has biased composition (polar residues). Residues 1 to 24 (MSETMTNQNVVNEEQPFNESKHRS) are disordered. One can recognise an ABC transporter domain in the interval 48–289 (LEVNKLKLFY…PSCKQTEDYI (242 aa)). ATP is bound at residue 80-87 (GPSGCGKS).

Belongs to the ABC transporter superfamily. Phosphate importer (TC 3.A.1.7) family. As to quaternary structure, the complex is composed of two ATP-binding proteins (PstB), two transmembrane proteins (PstC and PstA) and a solute-binding protein (PstS).

The protein localises to the cell inner membrane. It catalyses the reaction phosphate(out) + ATP + H2O = ADP + 2 phosphate(in) + H(+). In terms of biological role, part of the ABC transporter complex PstSACB involved in phosphate import. Responsible for energy coupling to the transport system. This Hahella chejuensis (strain KCTC 2396) protein is Phosphate import ATP-binding protein PstB.